We begin with the raw amino-acid sequence, 169 residues long: Putative phosphoesterase BLi01284/BL02661 (169 aa).

The Proton donor role is filled by H34. 2 short sequence motifs (HXTX) span residues 34 to 37 (HLTL) and 115 to 118 (HVTV). H115 serves as the catalytic Proton acceptor.

The protein belongs to the 2H phosphoesterase superfamily. YjcG family.

The polypeptide is Putative phosphoesterase BLi01284/BL02661 (Bacillus licheniformis (strain ATCC 14580 / DSM 13 / JCM 2505 / CCUG 7422 / NBRC 12200 / NCIMB 9375 / NCTC 10341 / NRRL NRS-1264 / Gibson 46)).